The chain runs to 1637 residues: Serine/threonine-protein kinase Genghis Khan (1637 aa).

The Protein kinase domain maps to 100–369; that stretch reads FDILKIIGRG…IQDFMDHPWF (270 aa). ATP is bound by residues 106-114 and lysine 129; that span reads IGRGAFGEV. The Proton acceptor role is filled by aspartate 224. Positions 370 to 440 constitute an AGC-kinase C-terminal domain; the sequence is VGIDWKNIRQ…SLTSSSTLDS (71 aa). Coiled-coil stretches lie at residues 473-587, 643-688, and 839-881; these read VDSV…EDAV, SEKL…LKYT, and DELS…DLQK. The tract at residues 538–575 is disordered; it reads RNQKQKLSRQVRDKEEELDGAMQKNDSLRNELRKSDKT. Residues 563-575 are compositionally biased toward basic and acidic residues; sequence DSLRNELRKSDKT. Threonine 895 is modified (phosphothreonine). The tract at residues 952 to 971 is disordered; sequence NNKDHSSMKEASVSDLSREE. Residues 989 to 1039 form a Phorbol-ester/DAG-type zinc finger; it reads IHQFLVRTFSSPTKCNHCTSLMVGLTRQGVVCEICGFACHTICCQKVPTTC. In terms of domain architecture, PH spans 1059 to 1177; sequence GTAYEGYVKV…WVIALGELHR (119 aa). Residues 1203–1489 form the CNH domain; that stretch reads IRNALCSVII…LPLNNLGNVV (287 aa). The region spanning 1546 to 1559 is the CRIB domain; that stretch reads ISAPTNFNHISHMG. At serine 1584 the chain carries Phosphoserine. A disordered region spans residues 1611-1637; the sequence is DYGNDNIISRTPSPMASSFMDGLSNND. Residues 1616–1626 are compositionally biased toward polar residues; the sequence is NIISRTPSPMA.

The protein belongs to the protein kinase superfamily. AGC Ser/Thr protein kinase family. DMPK subfamily. In terms of assembly, interacts tightly with GTP-bound but not GDP-bound Cdc42.

The enzyme catalyses L-seryl-[protein] + ATP = O-phospho-L-seryl-[protein] + ADP + H(+). It catalyses the reaction L-threonyl-[protein] + ATP = O-phospho-L-threonyl-[protein] + ADP + H(+). Functionally, acts as a downstream effector for the regulation of actin polymerization by Cdc42. This Drosophila melanogaster (Fruit fly) protein is Serine/threonine-protein kinase Genghis Khan (gek).